The following is a 634-amino-acid chain: Growth hormone receptor (634 aa).

An N-terminal signal peptide occupies residues 1-18 (MDLWQLLLTLAVAGSSDA). Residues 19–260 (FSGSEATPAF…NPSACEEDFQ (242 aa)) are Extracellular-facing. Residue Asn-46 is glycosylated (N-linked (GlcNAc...) asparagine). Residues Cys-56 and Cys-66 are joined by a disulfide bond. N-linked (GlcNAc...) asparagine glycosylation is present at Asn-73. A disulfide bridge links Cys-97 with Cys-108. Asn-111 carries an N-linked (GlcNAc...) asparagine glycan. A disulfide bond links Cys-122 and Cys-136. One can recognise a Fibronectin type-III domain in the interval 147–250 (PPVGLNWTLL…EVLLITFPQM (104 aa)). Asn-152, Asn-157, and Asn-196 each carry an N-linked (GlcNAc...) asparagine glycan. The short motif at 236–240 (YGKFS) is the WSXWS motif element. The chain crosses the membrane as a helical span at residues 261–284 (FPWFLIIMFGILGLAVTLFLLIFS). The Cytoplasmic segment spans residues 285–634 (KQQRIKMLIL…STDQLNKIMP (350 aa)). The required for JAK2 binding stretch occupies residues 290-375 (KMLILPPVPV…HEKSLNIFGA (86 aa)). A Box 1 motif motif is present at residues 293 to 301 (ILPPVPVPK). The UbE motif motif lies at 336 to 345 (DSWVEFIELD). Ser-337 carries the post-translational modification Phosphoserine. A phosphotyrosine mark is found at Tyr-483 and Tyr-591.

Belongs to the type I cytokine receptor family. Type 1 subfamily. On growth hormone (GH) binding, forms homodimers and binds JAK2 via a box 1-containing domain. Post-translationally, the soluble form (GHBP) is produced by phorbol ester-promoted proteolytic cleavage at the cell surface (shedding) by ADAM17/TACE. Shedding is inhibited by growth hormone (GH) binding to the receptor probably due to a conformational change in GHR rendering the receptor inaccessible to ADAM17. In terms of processing, on GH binding, phosphorylated on tyrosine residues in the cytoplasmic domain by JAK2. Ubiquitinated by the ECS(SOCS2) complex following ligand-binding and phosphorylation by JAK2, leading to its degradation by the proteasome. Regulation by the ECS(SOCS2) complex acts as a negative feedback loop of growth hormone receptor signaling. Ubiquitination is not sufficient for GHR internalization.

Its subcellular location is the cell membrane. It is found in the secreted. Its function is as follows. Receptor for pituitary gland growth hormone (GH1) involved in regulating postnatal body growth. On ligand binding, couples to the JAK2/STAT5 pathway. In terms of biological role, the soluble form (GHBP) acts as a reservoir of growth hormone in plasma and may be a modulator/inhibitor of GH signaling. The protein is Growth hormone receptor (GHR) of Bos indicus (Zebu).